We begin with the raw amino-acid sequence, 576 residues long: Low-affinity glucose transporter HXT4 (576 aa).

Residues 1-56 are disordered; that stretch reads MSEEAAYQEDTAVQNTPADALSPVESDSNSALSTPSNKAERDDMKDFDENHEESNN. The Cytoplasmic segment spans residues 1-66; sequence MSEEAAYQED…YVEIPKKPAS (66 aa). Residues 25 to 37 show a composition bias toward polar residues; sequence ESDSNSALSTPSN. Residues 38 to 54 show a composition bias toward basic and acidic residues; sequence KAERDDMKDFDENHEES. Lys45 participates in a covalent cross-link: Glycyl lysine isopeptide (Lys-Gly) (interchain with G-Cter in ubiquitin). Residues 67–87 traverse the membrane as a helical segment; it reads AYVTVSICCLMVAFGGFVFGW. Residues 88 to 122 lie on the Extracellular side of the membrane; it reads DTGTISGFVAQTDFIRRFGMKHHDGTYYLSKVRTG. The chain crosses the membrane as a helical span at residues 123-143; sequence LIVSIFNIGCAIGGIILARLG. The Cytoplasmic portion of the chain corresponds to 144 to 149; sequence DMYGRK. Residues 150–170 traverse the membrane as a helical segment; it reads MGLIVVVVIYIIGIIIQIASI. The Extracellular segment spans residues 171–180; sequence NKWYQYFIGR. A helical membrane pass occupies residues 181–201; it reads IISGLGVGGIAVLSPMLISEV. At 202 to 207 the chain is on the cytoplasmic side; sequence SPKHIR. A helical membrane pass occupies residues 208–228; it reads GTLVSCYQLMITLGIFLGYCT. At 229 to 242 the chain is on the extracellular side; it reads NYGTKTYTNSVQWR. The chain crosses the membrane as a helical span at residues 243–263; sequence VPLGLGFAWALFMIGGMTFVP. At 264 to 346 the chain is on the cytoplasmic side; it reads ESPRYLVEVG…IQSLQQLTGD (83 aa). Residues 347–363 traverse the membrane as a helical segment; that stretch reads NYFFYYGTTVFTAVGLE. Topologically, residues 364–369 are extracellular; it reads DSFETS. A helical transmembrane segment spans residues 370-387; it reads IVLGIVNFASTFVGIFLV. Residues 388–394 are Cytoplasmic-facing; sequence ERYGRRR. Residues 395-415 traverse the membrane as a helical segment; it reads CLLWGAASMTACMVVFASVGV. Over 416–437 the chain is Extracellular; sequence TRLWPNGKKNGSSKGAGNCMIV. Asn425 is a glycosylation site (N-linked (GlcNAc...) asparagine). The helical transmembrane segment at 438–458 threads the bilayer; sequence FTCFYLFCFATTWAPIPFVVN. The Cytoplasmic segment spans residues 459–475; the sequence is SETFPLRVKSKCMAIAQ. The helical transmembrane segment at 476 to 496 threads the bilayer; sequence ACNWIWGFLIGFFTPFISGAI. A topological domain (extracellular) is located at residue Asp497. A helical membrane pass occupies residues 498 to 518; the sequence is FYYGYVFMGCLVFSYFYVFFF. Over 519–576 the chain is Cytoplasmic; sequence VPETKGLTLEEVNTLWEEGVLPWKSPSWVPPNKRGTDYNADDLMHDDQPFYKKMFGKK.

This sequence belongs to the major facilitator superfamily. Sugar transporter (TC 2.A.1.1) family.

Its subcellular location is the cell membrane. Its activity is regulated as follows. Xylose uptake is strongly inhibited by glucose. Functionally, low-affinity glucose transporter. Can also transport xylose. The protein is Low-affinity glucose transporter HXT4 (HXT4) of Saccharomyces cerevisiae (strain YJM789) (Baker's yeast).